Consider the following 103-residue polypeptide: Large ribosomal subunit protein bL21 (103 aa).

It belongs to the bacterial ribosomal protein bL21 family. Part of the 50S ribosomal subunit. Contacts protein L20.

Its function is as follows. This protein binds to 23S rRNA in the presence of protein L20. This Vibrio cholerae serotype O1 (strain ATCC 39541 / Classical Ogawa 395 / O395) protein is Large ribosomal subunit protein bL21.